The sequence spans 639 residues: Eukaryotic translation initiation factor 2-alpha kinase 2 (639 aa).

In terms of domain architecture, Protein kinase spans 171 to 588; it reads FEEYSLLGRG…LEVLNCGLLL (418 aa). Residues 177–185 and Lys-200 each bind ATP; that span reads LGRGGFGSV. Low complexity predominate over residues 298-320; that stretch reads ISTSRKSSYSSTTESSNFENLES. The disordered stretch occupies residues 298–322; it reads ISTSRKSSYSSTTESSNFENLESPR. Catalysis depends on Asp-417, which acts as the Proton acceptor.

The protein belongs to the protein kinase superfamily. Ser/Thr protein kinase family. GCN2 subfamily. Post-translationally, autophosphorylated.

The catalysed reaction is L-seryl-[protein] + ATP = O-phospho-L-seryl-[protein] + ADP + H(+). The enzyme catalyses L-threonyl-[protein] + ATP = O-phospho-L-threonyl-[protein] + ADP + H(+). Mediates down-regulation of protein synthesis in response to stress conditions by the phosphorylation of the alpha subunit of eIF-2 (tif211) on 'Ser-52'. Protein synthesis is inhibited at the level of initiation. Activity is inhibited in the presence of heme. This chain is Eukaryotic translation initiation factor 2-alpha kinase 2 (hri2), found in Schizosaccharomyces pombe (strain 972 / ATCC 24843) (Fission yeast).